The following is a 226-amino-acid chain: 7-cyano-7-deazaguanine synthase (226 aa).

8-18 (ISGGLDSTTCL) is an ATP binding site. Zn(2+)-binding residues include Cys-188, Cys-198, Cys-201, and Cys-204.

This sequence belongs to the QueC family. Zn(2+) serves as cofactor.

It catalyses the reaction 7-carboxy-7-deazaguanine + NH4(+) + ATP = 7-cyano-7-deazaguanine + ADP + phosphate + H2O + H(+). It participates in purine metabolism; 7-cyano-7-deazaguanine biosynthesis. In terms of biological role, catalyzes the ATP-dependent conversion of 7-carboxy-7-deazaguanine (CDG) to 7-cyano-7-deazaguanine (preQ(0)). This Coxiella burnetii (strain RSA 493 / Nine Mile phase I) protein is 7-cyano-7-deazaguanine synthase.